The following is a 224-amino-acid chain: Ribose-5-phosphate isomerase A (224 aa).

Substrate contacts are provided by residues 32-35, 85-88, and 98-101; these read TGST, DGAD, and KGGG. Residue glutamate 107 is the Proton acceptor of the active site. Lysine 125 contributes to the substrate binding site.

This sequence belongs to the ribose 5-phosphate isomerase family. As to quaternary structure, homodimer.

The catalysed reaction is aldehydo-D-ribose 5-phosphate = D-ribulose 5-phosphate. Its pathway is carbohydrate degradation; pentose phosphate pathway; D-ribose 5-phosphate from D-ribulose 5-phosphate (non-oxidative stage): step 1/1. Its function is as follows. Catalyzes the reversible conversion of ribose-5-phosphate to ribulose 5-phosphate. The polypeptide is Ribose-5-phosphate isomerase A (Pseudomonas entomophila (strain L48)).